Here is a 200-residue protein sequence, read N- to C-terminus: Holliday junction branch migration complex subunit RuvA (200 aa).

The segment at 1–63 is domain I; sequence MIALVQGRVA…EDSLTLFGFA (63 aa). Positions 64 to 138 are domain II; that stretch reads DADERDVFEL…DRLGPAQGAA (75 aa). Residues 138-142 are flexible linker; the sequence is APAAP. A domain III region spans residues 143–200; that stretch reads VAVDDGADVVDALVGLGWPVRQAQDAVRGVLEDADGTAPDAAGLLRAALRSLAGDARG.

Belongs to the RuvA family. In terms of assembly, homotetramer. Forms an RuvA(8)-RuvB(12)-Holliday junction (HJ) complex. HJ DNA is sandwiched between 2 RuvA tetramers; dsDNA enters through RuvA and exits via RuvB. An RuvB hexamer assembles on each DNA strand where it exits the tetramer. Each RuvB hexamer is contacted by two RuvA subunits (via domain III) on 2 adjacent RuvB subunits; this complex drives branch migration. In the full resolvosome a probable DNA-RuvA(4)-RuvB(12)-RuvC(2) complex forms which resolves the HJ.

The protein resides in the cytoplasm. Its function is as follows. The RuvA-RuvB-RuvC complex processes Holliday junction (HJ) DNA during genetic recombination and DNA repair, while the RuvA-RuvB complex plays an important role in the rescue of blocked DNA replication forks via replication fork reversal (RFR). RuvA specifically binds to HJ cruciform DNA, conferring on it an open structure. The RuvB hexamer acts as an ATP-dependent pump, pulling dsDNA into and through the RuvAB complex. HJ branch migration allows RuvC to scan DNA until it finds its consensus sequence, where it cleaves and resolves the cruciform DNA. In Beutenbergia cavernae (strain ATCC BAA-8 / DSM 12333 / CCUG 43141 / JCM 11478 / NBRC 16432 / NCIMB 13614 / HKI 0122), this protein is Holliday junction branch migration complex subunit RuvA.